Consider the following 440-residue polypeptide: tRNA-2-methylthio-N(6)-dimethylallyladenosine synthase (440 aa).

Residues 2–117 (KGLYIKTYGC…LPELIVKASR (116 aa)) form the MTTase N-terminal domain. Positions 11, 47, 80, 157, 161, and 164 each coordinate [4Fe-4S] cluster. In terms of domain architecture, Radical SAM core spans 143 to 374 (NSQGSSAFLA…QELISKQQLE (232 aa)). In terms of domain architecture, TRAM spans 377–440 (QSMIGKTIPV…RQNSLLGCAA (64 aa)).

Belongs to the methylthiotransferase family. MiaB subfamily. In terms of assembly, monomer. [4Fe-4S] cluster is required as a cofactor.

It localises to the cytoplasm. The enzyme catalyses N(6)-dimethylallyladenosine(37) in tRNA + (sulfur carrier)-SH + AH2 + 2 S-adenosyl-L-methionine = 2-methylsulfanyl-N(6)-dimethylallyladenosine(37) in tRNA + (sulfur carrier)-H + 5'-deoxyadenosine + L-methionine + A + S-adenosyl-L-homocysteine + 2 H(+). Catalyzes the methylthiolation of N6-(dimethylallyl)adenosine (i(6)A), leading to the formation of 2-methylthio-N6-(dimethylallyl)adenosine (ms(2)i(6)A) at position 37 in tRNAs that read codons beginning with uridine. The protein is tRNA-2-methylthio-N(6)-dimethylallyladenosine synthase of Wolbachia pipientis subsp. Culex pipiens (strain wPip).